The primary structure comprises 127 residues: Large ribosomal subunit protein bL20 (127 aa).

The protein belongs to the bacterial ribosomal protein bL20 family.

Its function is as follows. Binds directly to 23S ribosomal RNA and is necessary for the in vitro assembly process of the 50S ribosomal subunit. It is not involved in the protein synthesizing functions of that subunit. This chain is Large ribosomal subunit protein bL20 (rplT), found in Mycoplasma pneumoniae (strain ATCC 29342 / M129 / Subtype 1) (Mycoplasmoides pneumoniae).